The chain runs to 207 residues: Proteasome subunit beta 2 (207 aa).

A propeptide spans 1 to 10 (removed in mature form; by autocatalysis); the sequence is MLQLTEKFKG. The Nucleophile role is filled by Thr11.

The protein belongs to the peptidase T1B family. In terms of assembly, the 20S proteasome core is composed of 14 alpha and 14 beta subunits that assemble into four stacked heptameric rings, resulting in a barrel-shaped structure. The two inner rings, each composed of seven catalytic beta subunits, are sandwiched by two outer rings, each composed of seven alpha subunits. The catalytic chamber with the active sites is on the inside of the barrel. Has a gated structure, the ends of the cylinder being occluded by the N-termini of the alpha-subunits. Is capped at one or both ends by the proteasome regulatory ATPase, PAN.

It is found in the cytoplasm. The enzyme catalyses Cleavage of peptide bonds with very broad specificity.. With respect to regulation, the formation of the proteasomal ATPase PAN-20S proteasome complex, via the docking of the C-termini of PAN into the intersubunit pockets in the alpha-rings, triggers opening of the gate for substrate entry. Interconversion between the open-gate and close-gate conformations leads to a dynamic regulation of the 20S proteasome proteolysis activity. Functionally, component of the proteasome core, a large protease complex with broad specificity involved in protein degradation. In Pyrococcus abyssi (strain GE5 / Orsay), this protein is Proteasome subunit beta 2.